Consider the following 198-residue polypeptide: Ribonuclease HII (198 aa).

Residues 11 to 198 enclose the RNase H type-2 domain; the sequence is NLIAGVDEVG…GPVKRVLGLV (188 aa). The a divalent metal cation site is built by Asp-17, Glu-18, and Asp-109.

The protein belongs to the RNase HII family. The cofactor is Mn(2+). Requires Mg(2+) as cofactor.

It localises to the cytoplasm. It carries out the reaction Endonucleolytic cleavage to 5'-phosphomonoester.. Endonuclease that specifically degrades the RNA of RNA-DNA hybrids. The sequence is that of Ribonuclease HII from Yersinia pseudotuberculosis serotype O:3 (strain YPIII).